The sequence spans 531 residues: Pyruvate kinase (531 aa).

Substrate is bound at residue Arg86. 4 residues coordinate K(+): Asn88, Ser90, Asp121, and Thr122. 88–91 (NFSH) contacts ATP. ATP contacts are provided by Arg128 and Lys211. Glu277 provides a ligand contact to Mg(2+). Substrate-binding residues include Gly300, Asp301, and Thr333. Asp301 is a Mg(2+) binding site.

The protein belongs to the pyruvate kinase family. In terms of assembly, homotetramer. Mg(2+) serves as cofactor. It depends on K(+) as a cofactor.

It carries out the reaction pyruvate + ATP = phosphoenolpyruvate + ADP + H(+). It participates in carbohydrate degradation; glycolysis; pyruvate from D-glyceraldehyde 3-phosphate: step 5/5. This Eimeria tenella (Coccidian parasite) protein is Pyruvate kinase (PYK).